The chain runs to 341 residues: ATP-dependent 6-phosphofructokinase 3 (341 aa).

ATP-binding positions include G10, 72-73 (RV), and 102-105 (GEGT). Position 103 (E103) interacts with Mg(2+). Residues 125–127 (TID), R162, 169–171 (MGR), E222, R266, and 272–275 (HVQR) contribute to the substrate site. Residue D127 is the Proton acceptor of the active site.

It belongs to the phosphofructokinase type A (PFKA) family. Mixed-substrate PFK group III subfamily. Homodimer or homotetramer. It depends on Mg(2+) as a cofactor.

It localises to the cytoplasm. It catalyses the reaction beta-D-fructose 6-phosphate + ATP = beta-D-fructose 1,6-bisphosphate + ADP + H(+). The protein operates within carbohydrate degradation; glycolysis; D-glyceraldehyde 3-phosphate and glycerone phosphate from D-glucose: step 3/4. Its function is as follows. Catalyzes the phosphorylation of D-fructose 6-phosphate to fructose 1,6-bisphosphate by ATP, the first committing step of glycolysis. This chain is ATP-dependent 6-phosphofructokinase 3, found in Streptomyces coelicolor (strain ATCC BAA-471 / A3(2) / M145).